The primary structure comprises 270 residues: Aliphatic sulfonates import ATP-binding protein SsuB (270 aa).

The region spanning 17–238 (LAANDLRRTF…VRGSHRLAAL (222 aa)) is the ABC transporter domain. 49–56 (GRSGCGKS) is an ATP binding site. The segment at 250-270 (PGTPPEPEPVAPLPTHLRWAH) is disordered. Positions 251-261 (GTPPEPEPVAP) are enriched in pro residues.

Belongs to the ABC transporter superfamily. Aliphatic sulfonates importer (TC 3.A.1.17.2) family. The complex is composed of two ATP-binding proteins (SsuB), two transmembrane proteins (SsuC) and a solute-binding protein (SsuA).

It is found in the cell inner membrane. It carries out the reaction ATP + H2O + aliphatic sulfonate-[sulfonate-binding protein]Side 1 = ADP + phosphate + aliphatic sulfonateSide 2 + [sulfonate-binding protein]Side 1.. Its function is as follows. Part of the ABC transporter complex SsuABC involved in aliphatic sulfonates import. Responsible for energy coupling to the transport system. The polypeptide is Aliphatic sulfonates import ATP-binding protein SsuB (Pseudomonas entomophila (strain L48)).